Here is a 482-residue protein sequence, read N- to C-terminus: NADH-quinone oxidoreductase subunit N (482 aa).

Helical transmembrane passes span 11–31 (AVPE…GVFI), 37–57 (IPYY…WYIF), 77–97 (RFSV…FIYA), 106–126 (IPHT…VALV), 131–151 (LLTV…MVAL), 166–186 (FVIG…IFGA), 208–228 (LILV…LGTA), 255–275 (IAAY…LHVQ), 279–299 (MLIV…IVQS), 304–324 (MLAY…LCGT), 332–352 (MFYT…VVLM), 376–396 (AFMM…VGFI), 404–424 (ALIQ…AIVG), and 462–482 (LAVL…HLAF).

Belongs to the complex I subunit 2 family. As to quaternary structure, NDH-1 is composed of 14 different subunits. Subunits NuoA, H, J, K, L, M, N constitute the membrane sector of the complex.

It is found in the cell inner membrane. It carries out the reaction a quinone + NADH + 5 H(+)(in) = a quinol + NAD(+) + 4 H(+)(out). Functionally, NDH-1 shuttles electrons from NADH, via FMN and iron-sulfur (Fe-S) centers, to quinones in the respiratory chain. The immediate electron acceptor for the enzyme in this species is believed to be ubiquinone. Couples the redox reaction to proton translocation (for every two electrons transferred, four hydrogen ions are translocated across the cytoplasmic membrane), and thus conserves the redox energy in a proton gradient. This is NADH-quinone oxidoreductase subunit N from Coxiella burnetii (strain RSA 493 / Nine Mile phase I).